A 344-amino-acid chain; its full sequence is Probable dual-specificity RNA methyltransferase RlmN (344 aa).

The Proton acceptor role is filled by Glu92. Positions 98–325 constitute a Radical SAM core domain; the sequence is DEDRATLCVS…TTIRASRGED (228 aa). Cysteines 105 and 330 form a disulfide. [4Fe-4S] cluster contacts are provided by Cys112, Cys116, and Cys119. S-adenosyl-L-methionine is bound by residues 157 to 158, Ser189, 211 to 213, and His287; these read GE and SLH. Cys330 (S-methylcysteine intermediate) is an active-site residue.

This sequence belongs to the radical SAM superfamily. RlmN family. [4Fe-4S] cluster serves as cofactor.

It localises to the cytoplasm. The catalysed reaction is adenosine(2503) in 23S rRNA + 2 reduced [2Fe-2S]-[ferredoxin] + 2 S-adenosyl-L-methionine = 2-methyladenosine(2503) in 23S rRNA + 5'-deoxyadenosine + L-methionine + 2 oxidized [2Fe-2S]-[ferredoxin] + S-adenosyl-L-homocysteine. It catalyses the reaction adenosine(37) in tRNA + 2 reduced [2Fe-2S]-[ferredoxin] + 2 S-adenosyl-L-methionine = 2-methyladenosine(37) in tRNA + 5'-deoxyadenosine + L-methionine + 2 oxidized [2Fe-2S]-[ferredoxin] + S-adenosyl-L-homocysteine. Its function is as follows. Specifically methylates position 2 of adenine 2503 in 23S rRNA and position 2 of adenine 37 in tRNAs. The protein is Probable dual-specificity RNA methyltransferase RlmN of Bacteroides fragilis (strain ATCC 25285 / DSM 2151 / CCUG 4856 / JCM 11019 / LMG 10263 / NCTC 9343 / Onslow / VPI 2553 / EN-2).